Consider the following 128-residue polypeptide: Large ribosomal subunit protein bL12 (128 aa).

The protein belongs to the bacterial ribosomal protein bL12 family. In terms of assembly, homodimer. Part of the ribosomal stalk of the 50S ribosomal subunit. Forms a multimeric L10(L12)X complex, where L10 forms an elongated spine to which 2 to 4 L12 dimers bind in a sequential fashion. Binds GTP-bound translation factors.

Functionally, forms part of the ribosomal stalk which helps the ribosome interact with GTP-bound translation factors. Is thus essential for accurate translation. In Phenylobacterium zucineum (strain HLK1), this protein is Large ribosomal subunit protein bL12.